Reading from the N-terminus, the 297-residue chain is Hydroxysqualene synthase (297 aa).

It belongs to the phytoene/squalene synthase family. HpnC subfamily.

The catalysed reaction is presqualene diphosphate + H2O = hydroxysqualene + diphosphate. It participates in secondary metabolite biosynthesis; hopanoid biosynthesis. Functionally, involved in the biosynthesis of the hopanoid precursor squalene (SQ) from farnesyl diphosphate (FPP). Catalyzes the second step, the conversion of presqualene diphosphate (PSPP) to hydroxysqualene (HSQ). The sequence is that of Hydroxysqualene synthase from Zymomonas mobilis subsp. mobilis (strain ATCC 31821 / ZM4 / CP4).